The following is a 424-amino-acid chain: Endo-beta-1,4-galactanase (424 aa).

The N-terminal stretch at 1-26 is a signal peptide; sequence MKNVLAVFVVLIFVLGAFGTSGPAEA. A substrate-binding site is contributed by 142–145; the sequence is DPAK. The active-site Proton donor is Glu-190. Substrate contacts are provided by residues 229-230 and His-263; that span reads TN. Catalysis depends on Glu-288, which acts as the Nucleophile. Thr-292 contacts substrate. The Ca(2+) site is built by Asp-297, Asp-299, His-301, and Asn-303. The substrate site is built by Lys-307 and Asp-384. Residues Ser-392 and Asp-395 each coordinate Ca(2+).

This sequence belongs to the glycosyl hydrolase 53 family. Ca(2+) serves as cofactor.

The enzyme catalyses The enzyme specifically hydrolyzes (1-&gt;4)-beta-D-galactosidic linkages in type I arabinogalactans.. In terms of biological role, involved in galactan degradation. Degrades arabinose-free galactan to galactooligosaccharides, producing galactotetraose as the main product along with galactotriose, galactobiose, and galactose. May hydrolyze the beta-1,4-galactan linkages of the galactan portion of arabinogalactan type I, a pectic plant polysaccharide from which most of the arabinose has been removed. This Bacillus licheniformis (strain ATCC 14580 / DSM 13 / JCM 2505 / CCUG 7422 / NBRC 12200 / NCIMB 9375 / NCTC 10341 / NRRL NRS-1264 / Gibson 46) protein is Endo-beta-1,4-galactanase (ganB).